A 109-amino-acid polypeptide reads, in one-letter code: Spermidine export protein MdtI (109 aa).

4 consecutive transmembrane segments (helical) span residues 6–26 (WIHGAWLGLAIMLEIAANVLL), 36–56 (CYGILSLAAVLAAFSALSQAV), 64–84 (AYALWGGFGIAATLAAGWVLF), and 88–108 (LNPKGWVGVILLLAGMVMIKF).

The protein belongs to the drug/metabolite transporter (DMT) superfamily. Small multidrug resistance (SMR) (TC 2.A.7.1) family. MdtI subfamily. Forms a complex with MdtJ.

The protein localises to the cell inner membrane. In terms of biological role, catalyzes the excretion of spermidine. The protein is Spermidine export protein MdtI of Salmonella choleraesuis (strain SC-B67).